The following is a 180-amino-acid chain: ATP-dependent protease subunit HslV (180 aa).

Residue Thr5 is part of the active site. The Na(+) site is built by Gly161, Cys164, and Thr167.

The protein belongs to the peptidase T1B family. HslV subfamily. In terms of assembly, a double ring-shaped homohexamer of HslV is capped on each side by a ring-shaped HslU homohexamer. The assembly of the HslU/HslV complex is dependent on binding of ATP.

The protein resides in the cytoplasm. It catalyses the reaction ATP-dependent cleavage of peptide bonds with broad specificity.. With respect to regulation, allosterically activated by HslU binding. Protease subunit of a proteasome-like degradation complex believed to be a general protein degrading machinery. The chain is ATP-dependent protease subunit HslV from Campylobacter jejuni subsp. jejuni serotype O:6 (strain 81116 / NCTC 11828).